An 81-amino-acid polypeptide reads, in one-letter code: NAD(P)H-quinone oxidoreductase subunit L (81 aa).

A run of 2 helical transmembrane segments spans residues 13 to 33 (LLVI…IPLF) and 51 to 71 (LGIY…APFL).

Belongs to the complex I NdhL subunit family. In terms of assembly, NDH-1 can be composed of about 15 different subunits; different subcomplexes with different compositions have been identified which probably have different functions.

It localises to the cellular thylakoid membrane. The catalysed reaction is a plastoquinone + NADH + (n+1) H(+)(in) = a plastoquinol + NAD(+) + n H(+)(out). The enzyme catalyses a plastoquinone + NADPH + (n+1) H(+)(in) = a plastoquinol + NADP(+) + n H(+)(out). Functionally, NDH-1 shuttles electrons from an unknown electron donor, via FMN and iron-sulfur (Fe-S) centers, to quinones in the respiratory and/or the photosynthetic chain. The immediate electron acceptor for the enzyme in this species is believed to be plastoquinone. Couples the redox reaction to proton translocation, and thus conserves the redox energy in a proton gradient. Cyanobacterial NDH-1 also plays a role in inorganic carbon-concentration. This Synechococcus sp. (strain WH7803) protein is NAD(P)H-quinone oxidoreductase subunit L.